Here is a 401-residue protein sequence, read N- to C-terminus: Elongation factor Tu (401 aa).

Residues 10-211 (KPHLNVGTIG…ALDTFVPNPK (202 aa)) enclose the tr-type G domain. The segment at 19–26 (GHVDHGKT) is G1. Position 19–26 (19–26 (GHVDHGKT)) interacts with GTP. Mg(2+) is bound at residue Thr26. A G2 region spans residues 62–66 (GITIA). A G3 region spans residues 83–86 (DCPG). GTP contacts are provided by residues 83–87 (DCPGH) and 138–141 (NKAD). The segment at 138–141 (NKAD) is G4. Residues 179 to 181 (SAV) are G5.

This sequence belongs to the TRAFAC class translation factor GTPase superfamily. Classic translation factor GTPase family. EF-Tu/EF-1A subfamily. As to quaternary structure, monomer.

It localises to the cytoplasm. It catalyses the reaction GTP + H2O = GDP + phosphate + H(+). In terms of biological role, GTP hydrolase that promotes the GTP-dependent binding of aminoacyl-tRNA to the A-site of ribosomes during protein biosynthesis. This chain is Elongation factor Tu, found in Leptospira borgpetersenii serovar Hardjo-bovis (strain JB197).